We begin with the raw amino-acid sequence, 508 residues long: Early growth response protein 1 (508 aa).

2 disordered regions span residues 18–78 and 136–210; these read PQFL…ESFS and MTNP…QYPP. The segment covering 33–42 has biased composition (low complexity); the sequence is NNSSSSSSSS. Over residues 43–52 the composition is skewed to gly residues; the sequence is SGGGGGGGSN. Residues 139–164 are compositionally biased toward low complexity; sequence PPTSSSSAPSPAASSSSSASQSPPLS. Residue K278 forms a Glycyl lysine isopeptide (Lys-Gly) (interchain with G-Cter in SUMO2) linkage. Residues 292–311 are disordered; the sequence is SRMRKYPNRPSKTPPHERPY. C2H2-type zinc fingers lie at residues 311–335, 341–363, and 369–391; these read YACPVESCDRRFSRSDELTRHIRIH, FQCRICMRNFSRSDHLTTHIRTH, and FACDICGRKFARSDERKRHTKIH. The disordered stretch occupies residues 382–453; sequence DERKRHTKIH…SSTYPSPAHS (72 aa). A compositionally biased stretch (basic residues) spans 386-396; it reads RHTKIHLRQKD. The span at 402–450 shows a compositional bias: low complexity; the sequence is SVVASSAASSLSSYPSPVATSYPSPATTSFPSPVPTSYSSPGSSTYPSP. Repeat copies occupy residues 413–420, 421–428, 429–436, 437–444, 445–452, 453–460, and 462–468. The 7 X 8 AA tandem repeats of [TS](2)-[FY]-[PS]-S-P-[GSAV]-X stretch occupies residues 413–468; it reads SSYPSPVATSYPSPATTSFPSPVPTSYSSPGSSTYPSPAHSGFPSPSVATTYASVP.

It belongs to the EGR C2H2-type zinc-finger protein family. In terms of assembly, interacts with SNAI1 and SP1 upon 12-O-tetradecanoylphorbol-13-acetate (TPA) induction. Detected in kidney thick ascending limbs and collecting ducts (at protein level).

The protein resides in the nucleus. The protein localises to the cytoplasm. In terms of biological role, transcriptional regulator. Recognizes and binds to the DNA sequence 5'-GCG(T/G)GGGCG-3'(EGR-site) in the promoter region of target genes. Binds double-stranded target DNA, irrespective of the cytosine methylation status. Regulates the transcription of numerous target genes, and thereby plays an important role in regulating the response to growth factors, DNA damage, and ischemia. Plays a role in the regulation of cell survival, proliferation and cell death. Activates expression of p53/TP53 and TGFB1, and thereby helps prevent tumor formation. Required for normal progress through mitosis and normal proliferation of hepatocytes after partial hepatectomy. Mediates responses to ischemia and hypoxia; regulates the expression of proteins such as IL1B and CXCL2 that are involved in inflammatory processes and development of tissue damage after ischemia. Regulates biosynthesis of luteinizing hormone (LHB) in the pituitary. Regulates the amplitude of the expression rhythms of clock genes: BMAL1, PER2 and NR1D1 in the liver via the activation of PER1 (clock repressor) transcription. Regulates the rhythmic expression of core-clock gene BMAL1 in the suprachiasmatic nucleus (SCN). Regulates biosynthesis of glucocorticoid receptor GR/NR3C1 in the hippocampus and thereby may play a role in the behavioral and hypothalamic-pituitary-adrenal responses to stress in offspring. The chain is Early growth response protein 1 (Egr1) from Rattus norvegicus (Rat).